We begin with the raw amino-acid sequence, 1381 residues long: Hepatocyte growth factor receptor (1381 aa).

Residues 1–24 form the signal peptide; the sequence is MKALAVLGPGLLVHLLTLVQKSGG. The Extracellular segment spans residues 25–932; it reads ECKEALVKSA…VIVQPDQNFT (908 aa). Residues 27 to 515 enclose the Sema domain; that stretch reads KEALVKSAMN…TGKTITKIPL (489 aa). Asn-45 and Asn-74 each carry an N-linked (GlcNAc...) asparagine glycan. 6 disulfides stabilise this stretch: Cys-95-Cys-101, Cys-98-Cys-159, Cys-133-Cys-141, Cys-172-Cys-175, Cys-298-Cys-363, and Cys-385-Cys-397. N-linked (GlcNAc...) asparagine glycosylation is present at Asn-106. Asn-358 carries an N-linked (GlcNAc...) asparagine glycan. An N-linked (GlcNAc...) asparagine glycan is attached at Asn-399. 4 disulfide bridges follow: Cys-520-Cys-538, Cys-526-Cys-561, Cys-529-Cys-545, and Cys-541-Cys-551. 3 consecutive IPT/TIG domains span residues 563-655, 657-739, and 742-836; these read PTIY…FSYV, PIIT…FNYR, and PIVD…LIYV. Thr-582 is a glycosylation site (O-linked (Man) threonine). Asn-607 and Asn-635 each carry an N-linked (GlcNAc...) asparagine glycan. O-linked (Man) threonine glycans are attached at residues Thr-676 and Thr-761. Residues Asn-785, Asn-879, and Asn-930 are each glycosylated (N-linked (GlcNAc...) asparagine). Residues 933–955 traverse the membrane as a helical segment; the sequence is GLIVGVISISVLLSLLFGLFLWL. Residues 956–1381 are Cytoplasmic-facing; it reads KRRKQIKDLG…QDHVDGEGDT (426 aa). Position 966 is a phosphoserine (Ser-966). Phosphothreonine is present on Thr-977. Phosphoserine occurs at positions 990, 997, and 1000. The residue at position 1003 (Tyr-1003) is a Phosphotyrosine. Residues 1078-1345 enclose the Protein kinase domain; it reads VHFNEVIGRG…RISAIFSAFI (268 aa). ATP is bound by residues 1084 to 1092 and Lys-1110; that span reads IGRGHFGCV. Asp-1204 (proton acceptor) is an active-site residue. Residues 1212-1381 form an interaction with RANBP9 region; the sequence is LDENFTVKVA…QDHVDGEGDT (170 aa). At Tyr-1230 the chain carries Phosphotyrosine. Phosphotyrosine; by autocatalysis occurs at positions 1234 and 1235. Thr-1289 is subject to Phosphothreonine. The interval 1320 to 1359 is interaction with MUC20; it reads WHPKAEQRPSFAELVSRISAIFSAFIGEHYVHVNATYVNV. 2 positions are modified to phosphotyrosine; by autocatalysis: Tyr-1349 and Tyr-1356. Tyr-1365 bears the Phosphotyrosine mark.

This sequence belongs to the protein kinase superfamily. Tyr protein kinase family. As to quaternary structure, heterodimer made of an alpha chain (50 kDa) and a beta chain (145 kDa) which are disulfide linked. Binds PLXNB1. Interacts when phosphorylated with downstream effectors including STAT3, PIK3R1, SRC, PCLG1, GRB2 and GAB1. Interacts with SPSB1, SPSB2 and SPSB4. Interacts with INPP5D/SHIP1. When phosphorylated at Tyr-1356, interacts with INPPL1/SHIP2. Interacts with RANBP9 and RANBP10, as well as SPSB1, SPSB2, SPSB3 and SPSB4. SPSB1 binding occurs in the presence and in the absence of HGF, however HGF treatment has a positive effect on this interaction. Interacts with MUC20; prevents interaction with GRB2 and suppresses hepatocyte growth factor-induced cell proliferation. Interacts with GRB10. Interacts with PTPN1 and PTPN2. Interacts with HSP90AA1 and HSP90AB1; the interaction suppresses MET kinase activity. Interacts with tensin TNS3. Interacts (when phosphorylated) with tensin TNS4 (via SH2 domain); the interaction increases MET protein stability by inhibiting MET endocytosis and subsequent lysosomal degradation. Post-translationally, autophosphorylated in response to ligand binding on Tyr-1234 and Tyr-1235 in the kinase domain leading to further phosphorylation of Tyr-1349 and Tyr-1356 in the C-terminal multifunctional docking site. Dephosphorylated by PTPRJ at Tyr-1349 and Tyr-1365. Dephosphorylated by PTPN1 and PTPN2. In terms of processing, ubiquitinated. Ubiquitination by CBL regulates the receptor stability and activity through proteasomal degradation. O-mannosylation of IPT/TIG domains by TMEM260 is required for protein maturation. O-mannosylated residues are composed of single mannose glycans that are not elongated or modified.

It localises to the membrane. The catalysed reaction is L-tyrosyl-[protein] + ATP = O-phospho-L-tyrosyl-[protein] + ADP + H(+). With respect to regulation, in its inactive state, the C-terminal tail interacts with the catalytic domain and inhibits the kinase activity. Upon ligand binding, the C-terminal tail is displaced and becomes phosphorylated, thus increasing the kinase activity. In terms of biological role, receptor tyrosine kinase that transduces signals from the extracellular matrix into the cytoplasm by binding to hepatocyte growth factor/HGF ligand. Regulates many physiological processes including proliferation, scattering, morphogenesis and survival. Ligand binding at the cell surface induces autophosphorylation of MET on its intracellular domain that provides docking sites for downstream signaling molecules. Following activation by ligand, interacts with the PI3-kinase subunit PIK3R1, PLCG1, SRC, GRB2, STAT3 or the adapter GAB1. Recruitment of these downstream effectors by MET leads to the activation of several signaling cascades including the RAS-ERK, PI3 kinase-AKT, or PLCgamma-PKC. The RAS-ERK activation is associated with the morphogenetic effects while PI3K/AKT coordinates prosurvival effects. During embryonic development, MET signaling plays a role in gastrulation, development and migration of muscles and neuronal precursors, angiogenesis and kidney formation. In adults, participates in wound healing as well as organ regeneration and tissue remodeling. Also promotes differentiation and proliferation of hematopoietic cells. The sequence is that of Hepatocyte growth factor receptor (MET) from Rhinolophus ferrumequinum (Greater horseshoe bat).